We begin with the raw amino-acid sequence, 325 residues long: Melanocortin receptor 5 (325 aa).

Residues 1–37 are Extracellular-facing; the sequence is MNSSFHLHFLDLGLNATEGNLSGLSVRNASSPCEDMG. Asparagine 2, asparagine 15, asparagine 20, and asparagine 28 each carry an N-linked (GlcNAc...) asparagine glycan. The chain crosses the membrane as a helical span at residues 38–61; the sequence is IAVEVFLALGLISLLENILVIGAI. Topologically, residues 62–73 are cytoplasmic; that stretch reads VRNRNLHIPMYF. A helical membrane pass occupies residues 74 to 97; the sequence is FVGSLAVADMLVSLSNFWETITIY. Residues 98–114 are Extracellular-facing; the sequence is LLTNKHLVMADASVRHL. The helical transmembrane segment at 115–138 threads the bilayer; that stretch reads DNVFDSMICISVVASMCSLLAIAV. Residues 139–155 are Cytoplasmic-facing; the sequence is DRYVTIFCRLRYQRIMT. A helical transmembrane segment spans residues 156 to 179; it reads GRRSGAIIAGIWAFCTSCGTVFIV. Residues 180 to 186 are Extracellular-facing; that stretch reads YYESTYV. Residues 187–211 form a helical membrane-spanning segment; it reads VVCLIAMFLTMLLLMASLYTHMFLL. The Cytoplasmic segment spans residues 212 to 239; that stretch reads ARTHVRRIAALPGHSSVRQRTGVKGAIT. Residues 240 to 265 traverse the membrane as a helical segment; the sequence is LAMLLGVFIICWAPFFLHLILMISCP. The Extracellular segment spans residues 266–273; it reads QNLYCSCF. The chain crosses the membrane as a helical span at residues 274–297; that stretch reads MSHFNMYLILIMCNSVIDPLIYAF. The Cytoplasmic segment spans residues 298–325; that stretch reads RSQEMRKTFKEIVCFQGFRTPCRFPSTY. A lipid anchor (S-palmitoyl cysteine) is attached at cysteine 311.

This sequence belongs to the G-protein coupled receptor 1 family.

Its subcellular location is the cell membrane. Receptor for MSH (alpha, beta and gamma) and ACTH. The activity of this receptor is mediated by G proteins which activate adenylate cyclase. This receptor is a possible mediator of the immunomodulation properties of melanocortins. The polypeptide is Melanocortin receptor 5 (MC5R) (Ovis aries (Sheep)).